A 428-amino-acid polypeptide reads, in one-letter code: uncharacterized protein (428 aa).

The Glutaredoxin domain occupies 241-351 (KEEEEQSVGK…KLLGGCERVE (111 aa)). The segment covering 386 to 401 (EDDDDDDDEGDDDESV) has biased composition (acidic residues). The interval 386 to 405 (EDDDDDDDEGDDDESVKEER) is disordered.

This is an uncharacterized protein from Arabidopsis thaliana (Mouse-ear cress).